The primary structure comprises 30 residues: Trypsin inhibitor 4 (30 aa).

3 disulfide bridges follow: cysteine 3–cysteine 20, cysteine 10–cysteine 22, and cysteine 16–cysteine 28.

The protein belongs to the protease inhibitor I7 (squash-type serine protease inhibitor) family.

Its subcellular location is the secreted. Its function is as follows. Inhibits trypsin; probably participates in a plant defense mechanism. The chain is Trypsin inhibitor 4 from Momordica charantia (Bitter gourd).